The sequence spans 411 residues: NADH-quinone oxidoreductase subunit H (411 aa).

9 helical membrane passes run 18–38, 84–104, 124–144, 165–185, 198–218, 260–280, 288–308, 321–341, and 352–372; these read LAKS…AILI, WIYL…FAVI, LPVA…GIVL, VISY…YAGT, TWYI…MVGE, VSAL…PISI, WWPL…FMWL, MALG…IVAI, and APAT…ALLG.

It belongs to the complex I subunit 1 family. NDH-1 is composed of 14 different subunits. Subunits NuoA, H, J, K, L, M, N constitute the membrane sector of the complex.

The protein localises to the cell membrane. The enzyme catalyses a quinone + NADH + 5 H(+)(in) = a quinol + NAD(+) + 4 H(+)(out). NDH-1 shuttles electrons from NADH, via FMN and iron-sulfur (Fe-S) centers, to quinones in the respiratory chain. The immediate electron acceptor for the enzyme in this species is believed to be menaquinone. Couples the redox reaction to proton translocation (for every two electrons transferred, four hydrogen ions are translocated across the cytoplasmic membrane), and thus conserves the redox energy in a proton gradient. This subunit may bind ubiquinone. The sequence is that of NADH-quinone oxidoreductase subunit H from Mycolicibacterium vanbaalenii (strain DSM 7251 / JCM 13017 / BCRC 16820 / KCTC 9966 / NRRL B-24157 / PYR-1) (Mycobacterium vanbaalenii).